Consider the following 237-residue polypeptide: Ribonuclease PH (237 aa).

Phosphate contacts are provided by residues R86 and 124–126; that span reads GTR.

Belongs to the RNase PH family. As to quaternary structure, homohexameric ring arranged as a trimer of dimers.

It catalyses the reaction tRNA(n+1) + phosphate = tRNA(n) + a ribonucleoside 5'-diphosphate. In terms of biological role, phosphorolytic 3'-5' exoribonuclease that plays an important role in tRNA 3'-end maturation. Removes nucleotide residues following the 3'-CCA terminus of tRNAs; can also add nucleotides to the ends of RNA molecules by using nucleoside diphosphates as substrates, but this may not be physiologically important. Probably plays a role in initiation of 16S rRNA degradation (leading to ribosome degradation) during starvation. In Shewanella frigidimarina (strain NCIMB 400), this protein is Ribonuclease PH.